A 219-amino-acid chain; its full sequence is Probable nicotinate-nucleotide adenylyltransferase (219 aa).

Belongs to the NadD family.

The enzyme catalyses nicotinate beta-D-ribonucleotide + ATP + H(+) = deamido-NAD(+) + diphosphate. It functions in the pathway cofactor biosynthesis; NAD(+) biosynthesis; deamido-NAD(+) from nicotinate D-ribonucleotide: step 1/1. Its function is as follows. Catalyzes the reversible adenylation of nicotinate mononucleotide (NaMN) to nicotinic acid adenine dinucleotide (NaAD). The sequence is that of Probable nicotinate-nucleotide adenylyltransferase from Enterococcus faecalis (strain ATCC 700802 / V583).